The chain runs to 561 residues: Cytosolic purine 5'-nucleotidase (561 aa).

D52 serves as the catalytic Nucleophile. The GMP site is built by D52 and D54. Residues D52 and D54 each contribute to the IMP site. Mg(2+) contacts are provided by D52 and D54. D54 serves as the catalytic Proton donor. Residue R144 participates in (2R)-2,3-bisphosphoglycerate binding. R144 and N154 together coordinate ATP. DATP contacts are provided by R144 and N154. N154 lines the adenosine pocket. P(1),P(4)-bis(5'-adenosyl) tetraphosphate is bound at residue N154. R202, D206, K215, T249, and N250 together coordinate GMP. IMP contacts are provided by R202, D206, K215, T249, N250, S251, and K292. K292 contributes to the GMP binding site. Position 351 (D351) interacts with Mg(2+). (2R)-2,3-bisphosphoglycerate is bound at residue K362. Residue K362 coordinates P(1),P(4)-bis(5'-adenosyl) tetraphosphate. Phosphoserine is present on S418. Adenosine-binding residues include M436 and Q453. The ATP site is built by Q453 and R456. Positions 453 and 456 each coordinate dATP. Position 453 (Q453) interacts with P(1),P(4)-bis(5'-adenosyl) tetraphosphate. Y457 provides a ligand contact to (2R)-2,3-bisphosphoglycerate. Y457 contributes to the P(1),P(4)-bis(5'-adenosyl) tetraphosphate binding site. Phosphoserine is present on residues S502, S511, and S527. The segment at 538–561 is disordered; that stretch reads PLAPQEITHCHDEDDDEEEEEEEE. The interval 548–561 is required for tetramer assembly; the sequence is HDEDDDEEEEEEEE. The span at 550–561 shows a compositional bias: acidic residues; that stretch reads EDDDEEEEEEEE.

Belongs to the 5'(3')-deoxyribonucleotidase family. In terms of assembly, homotetramer. It depends on Mg(2+) as a cofactor. As to expression, widely expressed.

The protein localises to the cytoplasm. It localises to the cytosol. The catalysed reaction is a ribonucleoside 5'-phosphate + H2O = a ribonucleoside + phosphate. It catalyses the reaction a 2'-deoxyribonucleoside + a ribonucleoside 5'-phosphate = a ribonucleoside + a 2'-deoxyribonucleoside 5'-phosphate. The enzyme catalyses IMP + H2O = inosine + phosphate. It carries out the reaction GMP + H2O = guanosine + phosphate. The catalysed reaction is dIMP + H2O = 2'-deoxyinosine + phosphate. It catalyses the reaction dGMP + H2O = 2'-deoxyguanosine + phosphate. The enzyme catalyses XMP + H2O = xanthosine + phosphate. It carries out the reaction inosine + GMP = guanosine + IMP. The catalysed reaction is dGMP + inosine = 2'-deoxyguanosine + IMP. It catalyses the reaction dIMP + inosine = 2'-deoxyinosine + IMP. The enzyme catalyses inosine + UMP = uridine + IMP. It carries out the reaction inosine + CMP = cytidine + IMP. The catalysed reaction is inosine + AMP = IMP + adenosine. Its activity is regulated as follows. Allosterically activated by various compounds including ATP, 2,3-BPG/2,3-Bisphosphoglyceric acid and Ap4A/P1,P4-bis(5'-adenosyl) tetraphosphate. Binding of an allosteric activator is a prerequisiste to magnesium and substrate binding. Inhibited by inorganic phosphate. Functionally, broad specificity cytosolic 5'-nucleotidase that catalyzes the dephosphorylation of 6-hydroxypurine nucleoside 5'-monophosphates. In addition, possesses a phosphotransferase activity by which it can transfer a phosphate from a donor nucleoside monophosphate to an acceptor nucleoside, preferably inosine, deoxyinosine and guanosine. Has the highest activities for IMP and GMP followed by dIMP, dGMP and XMP. Could also catalyze the transfer of phosphates from pyrimidine monophosphates but with lower efficiency. Through these activities regulates the purine nucleoside/nucleotide pools within the cell. This is Cytosolic purine 5'-nucleotidase from Homo sapiens (Human).